Reading from the N-terminus, the 191-residue chain is Protein HP-20 homolog (191 aa).

Positions 1–16 (MADLRILVSIILMTNA) are cleaved as a signal peptide. The Collagen-like domain maps to 22–58 (GCTGPPGPPGHPGPPGIRGPPGIRGIPGLPGPPGTPG). The interval 22-61 (GCTGPPGPPGHPGPPGIRGPPGIRGIPGLPGPPGTPGPSV) is disordered. A compositionally biased stretch (pro residues) spans 26–39 (PPGPPGHPGPPGIR). The C1q domain occupies 64 to 191 (PCHRQSAFTV…VTIYFSGFLT (128 aa)).

Its subcellular location is the secreted. The protein is Protein HP-20 homolog of Bos taurus (Bovine).